The chain runs to 211 residues: MTPWLGLVVLLSCWSLGHWGTEACTCSPSHPQDAFCNSDIVIRAKVVGKKLVKEGPFGTLVYTIKQMKMYRGFSKMPHVQYIHTEASESLCGLKLEVNKYQYLLTGRVYEGKMYTGLCNFVERWDHLTLSQRKGLNYRYHLGCNCKIKSCYYLPCFVTSKKECLWTDMLSNFGYPGYQSKHYACIRQKGGYCSWYRGWAPPDKSISNATDP.

The signal sequence occupies residues 1-23 (MTPWLGLVVLLSCWSLGHWGTEA). C24 is a binding site for Zn(2+). Involved in metalloproteinase-binding regions lie at residues 24–27 (CTCS) and 88–89 (ES). 6 disulfides stabilise this stretch: C24/C91, C26/C118, C36/C143, C145/C192, C150/C155, and C163/C184. The 120-residue stretch at 24 to 143 (CTCSPSHPQD…GLNYRYHLGC (120 aa)) folds into the NTR domain. Positions 105–188 (TGRVYEGKMY…SKHYACIRQK (84 aa)) are mediates interaction with EFEMP1.

Belongs to the protease inhibitor I35 (TIMP) family. As to quaternary structure, interacts with EFEMP1. Interacts with KDR.

It localises to the secreted. The protein resides in the extracellular space. The protein localises to the extracellular matrix. In terms of biological role, mediates a variety of processes including matrix regulation and turnover, inflammation, and angiogenesis, through reversible inhibition of zinc protease superfamily enzymes, primarily matrix metalloproteinases (MMPs). Regulates extracellular matrix (ECM) remodeling through inhibition of matrix metalloproteinases (MMP) including MMP-1, MMP-2, MMP-3, MMP-7, MMP-9, MMP-13, MMP-14 and MMP-15. Additionally, modulates the processing of amyloid precursor protein (APP) and apolipoprotein E receptor ApoER2 by inhibiting two alpha-secretases ADAM10 and ADAM17. Functions as a tumor suppressor and a potent inhibitor of angiogenesis. Exerts its anti-angiogenic effect by directly interacting with vascular endothelial growth factor (VEGF) receptor-2/KDR, preventing its binding to the VEGFA ligand. Selectively induces apoptosis in angiogenic endothelial cells through a caspase-independent cell death pathway. Mechanistically, inhibits matrix-induced focal adhesion kinase PTK2 tyrosine phosphorylation and association with paxillin/PXN and disrupts the incorporation of ITGB3, PTK2 and PXN into focal adhesion contacts on the matrix. This chain is Metalloproteinase inhibitor 3 (Timp3), found in Rattus norvegicus (Rat).